Here is a 185-residue protein sequence, read N- to C-terminus: Elongation factor P (185 aa).

Belongs to the elongation factor P family.

The protein resides in the cytoplasm. It participates in protein biosynthesis; polypeptide chain elongation. In terms of biological role, involved in peptide bond synthesis. Stimulates efficient translation and peptide-bond synthesis on native or reconstituted 70S ribosomes in vitro. Probably functions indirectly by altering the affinity of the ribosome for aminoacyl-tRNA, thus increasing their reactivity as acceptors for peptidyl transferase. In Bacillus anthracis (strain CDC 684 / NRRL 3495), this protein is Elongation factor P.